Reading from the N-terminus, the 171-residue chain is Shikimate kinase (171 aa).

11–16 (GTGKTT) is a binding site for ATP. A Mg(2+)-binding site is contributed by Thr15. Substrate-binding residues include Asp33, Arg57, and Gly79. An ATP-binding site is contributed by Arg117. Residue Arg136 participates in substrate binding.

Belongs to the shikimate kinase family. Monomer. Requires Mg(2+) as cofactor.

It is found in the cytoplasm. The catalysed reaction is shikimate + ATP = 3-phosphoshikimate + ADP + H(+). Its pathway is metabolic intermediate biosynthesis; chorismate biosynthesis; chorismate from D-erythrose 4-phosphate and phosphoenolpyruvate: step 5/7. Functionally, catalyzes the specific phosphorylation of the 3-hydroxyl group of shikimic acid using ATP as a cosubstrate. The polypeptide is Shikimate kinase (Caldanaerobacter subterraneus subsp. tengcongensis (strain DSM 15242 / JCM 11007 / NBRC 100824 / MB4) (Thermoanaerobacter tengcongensis)).